Consider the following 136-residue polypeptide: Small ribosomal subunit protein uS12 (136 aa).

Asp-89 bears the 3-methylthioaspartic acid mark. A disordered region spans residues 101–136 (SLDTSGVADRKQSRSKYGAKQPKAGVPAPVKGKGKR).

The protein belongs to the universal ribosomal protein uS12 family. In terms of assembly, part of the 30S ribosomal subunit. Contacts proteins S8 and S17. May interact with IF1 in the 30S initiation complex.

In terms of biological role, with S4 and S5 plays an important role in translational accuracy. Its function is as follows. Interacts with and stabilizes bases of the 16S rRNA that are involved in tRNA selection in the A site and with the mRNA backbone. Located at the interface of the 30S and 50S subunits, it traverses the body of the 30S subunit contacting proteins on the other side and probably holding the rRNA structure together. The combined cluster of proteins S8, S12 and S17 appears to hold together the shoulder and platform of the 30S subunit. The sequence is that of Small ribosomal subunit protein uS12 from Pelodictyon phaeoclathratiforme (strain DSM 5477 / BU-1).